Here is a 578-residue protein sequence, read N- to C-terminus: Keratin, type II cytoskeletal 1b (578 aa).

Residues 1-163 (MSHQFSSQSA…DPEIQRIKTQ (163 aa)) form a head region. Arg95 carries the omega-N-methylarginine modification. Residues 164-200 (EREQIMVLNNKFASFIDKVRFLEQQNQVLQTKWELLQ) are coil 1A. In terms of domain architecture, IF rod spans 164–477 (EREQIMVLNN…QLLEGEESRM (314 aa)). The linker 1 stretch occupies residues 201 to 219 (QVNTSTGTNNLEPLLENYI). The segment at 220–311 (GDLRRQVDLL…LFLTELSQVQ (92 aa)) is coil 1B. Positions 312–335 (THISDTNVILSMDNNRSLDLDSII) are linker 12. Positions 336 to 474 (DAVRTQYELI…TYRQLLEGEE (139 aa)) are coil 2. The segment at 475–578 (SRMSGELQSH…TNTSHRRILE (104 aa)) is tail. Arg523 carries the omega-N-methylarginine modification. A compositionally biased stretch (gly residues) spans 547-556 (GSYGGSGRSG). Positions 547–578 (GSYGGSGRSGRGSSRVQIIQTSTNTSHRRILE) are disordered. The segment covering 562–571 (VQIIQTSTNT) has biased composition (polar residues).

It belongs to the intermediate filament family. Post-translationally, undergoes deimination of some arginine residues (citrullination). In terms of tissue distribution, expressed exclusively in skin.

This is Keratin, type II cytoskeletal 1b (KRT77) from Homo sapiens (Human).